The following is a 171-amino-acid chain: LIM domain transcription factor LMO4-A (171 aa).

The span at 1–19 (MVNNRSSESTTTAVSSNGS) shows a compositional bias: polar residues. The segment at 1-21 (MVNNRSSESTTTAVSSNGSPP) is disordered. LIM zinc-binding domains lie at 22 to 84 (KACA…LFGN) and 86 to 148 (GACN…GLLN).

At the start of gastrulation (stage 10), expressed in the mesodermal marginal zone. Shortly after (stage 11), expression is down-regulated in the dorsal most region. During neurulation, expressed in the neural plate and ventral epidermis. At late neurula stages, also expressed more rostrally, and then in the brain, migrating neural crests and ventral epidermis.

Functionally, acts as a positive cofactor of GATA transcription factors to establish the identity of the ventral mesoderm during gastrulation. Down-regulation in the dorsal mesoderm is necessary for the proper formation of this territory since, when present, lmo4 may bind ldb1 and restrict the availability of this cofactor for Spemman organizer transcription factors. At neurula stages, suppresses primary neuron differentiation and modulates gene expression at the Isthmic Organizer of the midbrain-hindbrain boundary. In Xenopus laevis (African clawed frog), this protein is LIM domain transcription factor LMO4-A (lmo4-a).